The chain runs to 1101 residues: Leucine-rich repeat receptor-like serine/threonine-protein kinase At1g17230 (1101 aa).

The signal sequence occupies residues 1–23 (MRGRICFLAIVILCSFSFILVRS). At 24–734 (LNEEGRVLLE…WLINGSQRQK (711 aa)) the chain is on the extracellular side. Residues N39, N57, N78, and N97 are each glycosylated (N-linked (GlcNAc...) asparagine). 26 LRR repeats span residues 66–90 (LRTV…ICKL), 91–115 (HGLR…SLCR), 117–137 (LEVL…QLTM), 138–162 (IITL…IGNL), 163–186 (SSLQ…MAKL), 188–210 (QLRI…ISGC), 211–234 (ESLK…LEKL), 235–258 (QNLT…VGNI), 260–282 (RLEV…IGKL), 283–306 (TKMK…IGNL), 308–329 (DAAE…EFGH), 330–354 (ILNL…LGEL), 355–379 (TLLE…QFLP), 381–402 (LVDL…IGFY), 403–426 (SNFS…FCRF), 427–450 (QTLI…LKTC), 451–474 (KSLT…LFNL), 476–498 (NLTA…LGKL), 499–522 (KNLE…IGNL), 524–546 (KIVG…LGSC), 548–569 (TIQR…ELGQ), 570–593 (LVYL…SFGD), 595–618 (TRLM…LGKL), 619–643 (TSLQ…LGNL), 644–667 (QMLE…IGNL), and 669–692 (SLLI…VFQR). N161 and N174 each carry an N-linked (GlcNAc...) asparagine glycan. Residues N236 and N257 are each glycosylated (N-linked (GlcNAc...) asparagine). N-linked (GlcNAc...) asparagine glycosylation occurs at N368. N-linked (GlcNAc...) asparagine glycosylation is present at N404. N-linked (GlcNAc...) asparagine glycans are attached at residues N476, N490, N510, N521, and N529. N-linked (GlcNAc...) asparagine glycosylation is found at N626 and N631. 2 N-linked (GlcNAc...) asparagine glycosylation sites follow: N674 and N728. Residues 735–755 (ILTITCIVIGSVFLITFLGLC) traverse the membrane as a helical segment. The Cytoplasmic segment spans residues 756 to 1101 (WTIKRREPAF…LEEANSSKEI (346 aa)). A phosphothreonine mark is found at T788 and T796. The Protein kinase domain occupies 799 to 1081 (FSEDVVLGRG…ITEARGSSSL (283 aa)). ATP-binding positions include 805–813 (LGRGACGTV) and K827. Residues Y874 and Y913 each carry the phosphotyrosine modification. Residue D926 is the Proton acceptor of the active site. The residue at position 960 (S960) is a Phosphoserine. 2 positions are modified to phosphotyrosine: Y968 and Y975. The residue at position 976 (T976) is a Phosphothreonine. The segment at 1076-1101 (RGSSSLSSSSITSETPLEEANSSKEI) is disordered. Residues 1078-1088 (SSSLSSSSITS) show a composition bias toward low complexity.

The protein belongs to the protein kinase superfamily. Ser/Thr protein kinase family.

It localises to the cell membrane. The catalysed reaction is L-seryl-[protein] + ATP = O-phospho-L-seryl-[protein] + ADP + H(+). It carries out the reaction L-threonyl-[protein] + ATP = O-phospho-L-threonyl-[protein] + ADP + H(+). The chain is Leucine-rich repeat receptor-like serine/threonine-protein kinase At1g17230 from Arabidopsis thaliana (Mouse-ear cress).